The chain runs to 145 residues: D-aminoacyl-tRNA deacylase (145 aa).

A Gly-cisPro motif, important for rejection of L-amino acids motif is present at residues 137 to 138 (GP).

Belongs to the DTD family. In terms of assembly, homodimer.

It is found in the cytoplasm. The catalysed reaction is glycyl-tRNA(Ala) + H2O = tRNA(Ala) + glycine + H(+). The enzyme catalyses a D-aminoacyl-tRNA + H2O = a tRNA + a D-alpha-amino acid + H(+). Its function is as follows. An aminoacyl-tRNA editing enzyme that deacylates mischarged D-aminoacyl-tRNAs. Also deacylates mischarged glycyl-tRNA(Ala), protecting cells against glycine mischarging by AlaRS. Acts via tRNA-based rather than protein-based catalysis; rejects L-amino acids rather than detecting D-amino acids in the active site. By recycling D-aminoacyl-tRNA to D-amino acids and free tRNA molecules, this enzyme counteracts the toxicity associated with the formation of D-aminoacyl-tRNA entities in vivo and helps enforce protein L-homochirality. The chain is D-aminoacyl-tRNA deacylase from Rhodopirellula baltica (strain DSM 10527 / NCIMB 13988 / SH1).